A 134-amino-acid chain; its full sequence is ATP synthase epsilon chain (134 aa).

Belongs to the ATPase epsilon chain family. As to quaternary structure, F-type ATPases have 2 components, CF(1) - the catalytic core - and CF(0) - the membrane proton channel. CF(1) has five subunits: alpha(3), beta(3), gamma(1), delta(1), epsilon(1). CF(0) has three main subunits: a, b and c. In this bacterium the a and b subunits are transcribed but do not seem to be translated, thus the ATP synthase consists of the alpha, beta, gamma, delta, epsilon and c subunits.

The protein resides in the cell membrane. In terms of biological role, produces ATP from ADP in the presence of a proton gradient across the membrane. The chain is ATP synthase epsilon chain from Moorella thermoacetica (strain ATCC 39073 / JCM 9320).